The following is a 596-amino-acid chain: Elongation factor 4 (596 aa).

One can recognise a tr-type G domain in the interval Lys2–Lys183. GTP contacts are provided by residues Asp14–Thr19 and Asn130–Asp133.

The protein belongs to the TRAFAC class translation factor GTPase superfamily. Classic translation factor GTPase family. LepA subfamily.

It localises to the cell inner membrane. It carries out the reaction GTP + H2O = GDP + phosphate + H(+). Functionally, required for accurate and efficient protein synthesis under certain stress conditions. May act as a fidelity factor of the translation reaction, by catalyzing a one-codon backward translocation of tRNAs on improperly translocated ribosomes. Back-translocation proceeds from a post-translocation (POST) complex to a pre-translocation (PRE) complex, thus giving elongation factor G a second chance to translocate the tRNAs correctly. Binds to ribosomes in a GTP-dependent manner. The sequence is that of Elongation factor 4 from Campylobacter lari (strain RM2100 / D67 / ATCC BAA-1060).